A 297-amino-acid chain; its full sequence is Formylmethanofuran--tetrahydromethanopterin formyltransferase (297 aa).

It belongs to the FTR family. As to quaternary structure, homotetramer.

It localises to the cytoplasm. It catalyses the reaction N-formylmethanofuran + 5,6,7,8-tetrahydromethanopterin + H(+) = N(5)-formyl-5,6,7,8-tetrahydromethanopterin + methanofuran. It functions in the pathway one-carbon metabolism; methanogenesis from CO(2); 5,10-methenyl-5,6,7,8-tetrahydromethanopterin from CO(2): step 2/3. Its function is as follows. Catalyzes the reversible transfer of a formyl group from formylmethanofuran (formyl-MFR) to tetrahydromethanopterin (H(4)MPT) to produce 5-formyl tetrahydromethanopterin (5-formyl-H(4)MPT) and methanofuran (MFR). The sequence is that of Formylmethanofuran--tetrahydromethanopterin formyltransferase from Methanosarcina barkeri (strain Fusaro / DSM 804).